The chain runs to 1308 residues: Misshapen-like kinase 1 (1308 aa).

The region spanning 25–289 (FELVEVVGNG…TEQLLKFPFI (265 aa)) is the Protein kinase domain. Residues 31–39 (VGNGTYGQV) and lysine 54 contribute to the ATP site. The active-site Proton acceptor is aspartate 153. Disordered stretches follow at residues 299 to 347 (RIQL…NVPG), 363 to 383 (KSNS…QRDP), and 395 to 862 (QRRI…GGTM). The span at 317 to 333 (EETEYEYSGSEEEDDSH) shows a compositional bias: acidic residues. 2 positions are modified to phosphoserine: serine 324 and serine 326. Low complexity predominate over residues 371–380 (QQQQLQQQQQ). Over residues 396–466 (RRIEEQKEER…EEQRQSERLQ (71 aa)) the composition is skewed to basic and acidic residues. Over residues 479 to 497 (LQQQQQQQQLQKQQQQQQQ) the composition is skewed to low complexity. Residues arginine 503 and arginine 511 each carry the omega-N-methylarginine modification. Residues 520 to 530 (AWAREVEERAR) are compositionally biased toward basic and acidic residues. Polar residues predominate over residues 600-610 (RSQSLQDQPTR). Positions 623–633 (PAAVPTPTATP) are enriched in low complexity. Serine 644 bears the Phosphoserine mark. Over residues 673–685 (QRTSSIATALNTS) the composition is skewed to polar residues. Aspartate 702, serine 720, serine 729, serine 745, serine 746, and serine 750 each carry phosphoserine. Residues 702–714 (DLRRSDPGWERSD) show a composition bias toward basic and acidic residues. The span at 773–797 (AIGEDFVLLKERTLDEAPKPPKKAM) shows a compositional bias: basic and acidic residues. Residues 804 to 820 (EEVESSEEEEEEGDGEP) show a composition bias toward acidic residues. Residues 842–1308 (MVVHDVEEIS…TLNRNCIMNW (467 aa)) form a mediates interaction with RAP2A region. Threonine 867 is subject to Phosphothreonine. A disordered region spans residues 881–918 (GYTNLPDVVQPSHSPTENSKGQSPPTKDGGSDYQSRGL). Positions 891-905 (PSHSPTENSKGQSPP) are enriched in polar residues. The CNH domain occupies 995–1282 (NSEILCAALW…KFLCERNDKV (288 aa)).

The protein belongs to the protein kinase superfamily. STE Ser/Thr protein kinase family. STE20 subfamily. As to quaternary structure, interacts with RAP2A and TANC1. Interacts with NCK1. Mg(2+) is required as a cofactor. Post-translationally, autophosphorylated. As to expression, appears to be ubiquitous, expressed in all tissue types examined. Highly expressed in the brain, moderately expressed in kidney and spleen, low levels present in heart and skeletal muscle. Isoform 2 is more abundant in the brain than isoform 1.

Its subcellular location is the cytoplasm. The protein localises to the postsynaptic density. It localises to the cell projection. The protein resides in the axon. It is found in the dendrite. The enzyme catalyses L-seryl-[protein] + ATP = O-phospho-L-seryl-[protein] + ADP + H(+). It catalyses the reaction L-threonyl-[protein] + ATP = O-phospho-L-threonyl-[protein] + ADP + H(+). In terms of biological role, serine/threonine kinase which acts as a negative regulator of Ras-related Rap2-mediated signal transduction to control neuronal structure and AMPA receptor trafficking. Required for normal synaptic density, dendrite complexity, as well as surface AMPA receptor expression in hippocampal neurons. Can activate the JNK and MAPK14/p38 pathways and mediates stimulation of the stress-activated protein kinase MAPK14/p38 MAPK downstream of the Raf/ERK pathway. Phosphorylates TANC1 upon stimulation by RAP2A, MBP and SMAD1. Has an essential function in negative selection of thymocytes, perhaps by coupling NCK1 to activation of JNK1. Activator of the Hippo signaling pathway which plays a pivotal role in organ size control and tumor suppression by restricting proliferation and promoting apoptosis. MAP4Ks act in parallel to and are partially redundant with STK3/MST2 and STK4/MST2 in the phosphorylation and activation of LATS1/2, and establish MAP4Ks as components of the expanded Hippo pathway. In Mus musculus (Mouse), this protein is Misshapen-like kinase 1.